A 177-amino-acid polypeptide reads, in one-letter code: Cytochrome c-type biogenesis protein CcmE (177 aa).

The Cytoplasmic portion of the chain corresponds to 1 to 7; it reads MTRKSRR. A helical; Signal-anchor for type II membrane protein transmembrane segment spans residues 8–28; the sequence is LILIAACGAVLALALGLILSA. Topologically, residues 29–177 are periplasmic; that stretch reads MSGSIVFFRS…DATLGQRSER (149 aa). Residues His122 and Tyr126 each contribute to the heme site. The tract at residues 133–177 is disordered; it reads DALKAQGRWQEGGSKEAPKDASKAAPKDAAKPETADATLGQRSER. Basic and acidic residues predominate over residues 145 to 166; the sequence is GSKEAPKDASKAAPKDAAKPET.

The protein belongs to the CcmE/CycJ family.

The protein resides in the cell inner membrane. Its function is as follows. Heme chaperone required for the biogenesis of c-type cytochromes. Transiently binds heme delivered by CcmC and transfers the heme to apo-cytochromes in a process facilitated by CcmF and CcmH. The sequence is that of Cytochrome c-type biogenesis protein CcmE from Methylorubrum extorquens (strain PA1) (Methylobacterium extorquens).